Here is a 399-residue protein sequence, read N- to C-terminus: Phosphoglycerate kinase (399 aa).

Substrate contacts are provided by residues Asp22–Asn24, Arg38, His61–Arg64, Arg119, and Arg152. ATP contacts are provided by residues Lys205, Gly296, Glu327, and Gly353–Thr356.

The protein belongs to the phosphoglycerate kinase family. In terms of assembly, monomer.

It is found in the cytoplasm. It carries out the reaction (2R)-3-phosphoglycerate + ATP = (2R)-3-phospho-glyceroyl phosphate + ADP. It participates in carbohydrate degradation; glycolysis; pyruvate from D-glyceraldehyde 3-phosphate: step 2/5. This is Phosphoglycerate kinase from Nitratiruptor sp. (strain SB155-2).